The primary structure comprises 697 residues: MSHVAVENVLNLDQQFAGLDLNSADAESGVAGTKGRYIPPHLRNKEASRNDSNWDSGRGGNGYINGMQDDRDGRMNGYDRGGYGSRGTGRSDRGFYDRENSGWNSGRDKDAYSSFGSRGDRGKGSLFNERGSGSRRTDDRRQDGFDGMGNRSDKSGFGRFDRGNSRWSDDRNDEDDWSKPLAPNDRVEQELFSGSNTGINFEKYDDIPVEATGSNCPPHIESFHDVTMGEIIMGNIQLTRYTRPTPVQKHAIPIIIEKRDLMACAQTGSGKTAAFLLPILSQIYADGPGDAMKHLQENGRYGRRKQFPLSLVLAPTRELAVQIYEEARKFAYRSRVRPCVVYGGADIGQQIRDLERGCHLLVATPGRLVDMMERGKIGLDFCKYLVLDEADRMLDMGFEPQIRRIVEQDTMPPKGVRQTMMFSATFPKEIQILARDFLDEYIFLAVGRVGSTSENITQKVVWVEEMDKRSFLLDLLNATGKDSLTLVFVETKKGADALEDFLYHEGYACTSIHGDRSQRDREEALHQFRSGKSPILVATAVAARGLDISNVKHVINFDLPSDIEEYVHRIGRTGRVGNLGLATSFFNEKNINITKDLLDLLVEAKQEVPSWLENMAYEQHHKSSSRGRSKSRFSGGFGAKDYRQSSGAGSSFGSSRGGRSSGHGGSRGFGGGYGGFYNSDGYGGNYGGSSQVDWWGN.

The segment at 27-189 (ESGVAGTKGR…PLAPNDRVEQ (163 aa)) is disordered. Basic and acidic residues-rich tracts occupy residues 89-111 (GRSDRGFYDRENSGWNSGRDKDA), 135-144 (RRTDDRRQDG), and 151-170 (RSDKSGFGRFDRGNSRWSDD). The Q motif signature appears at 221 to 249 (ESFHDVTMGEIIMGNIQLTRYTRPTPVQK). Residues 241-248 (YTRPTPVQ) and 265-272 (AQTGSGKT) each bind ATP. The Helicase ATP-binding domain maps to 252–444 (IPIIIEKRDL…RDFLDEYIFL (193 aa)). The DEAD box motif lies at 388 to 391 (DEAD). Residues 455 to 616 (NITQKVVWVE…EVPSWLENMA (162 aa)) form the Helicase C-terminal domain. The segment at 619–666 (QHHKSSSRGRSKSRFSGGFGAKDYRQSSGAGSSFGSSRGGRSSGHGGS) is disordered. The span at 622–631 (KSSSRGRSKS) shows a compositional bias: basic residues. A compositionally biased stretch (low complexity) spans 645 to 654 (SSGAGSSFGS). Positions 655–666 (SRGGRSSGHGGS) are enriched in gly residues.

The protein belongs to the DEAD box helicase family. DDX3/DED1 subfamily.

The protein localises to the cell membrane. The protein resides in the nucleus. It localises to the cytoplasm. It is found in the stress granule. Its subcellular location is the inflammasome. The protein localises to the cell projection. The protein resides in the lamellipodium. It carries out the reaction ATP + H2O = ADP + phosphate + H(+). In terms of biological role, multifunctional ATP-dependent RNA helicase. The ATPase activity can be stimulated by various ribo-and deoxynucleic acids indicative for a relaxed substrate specificity. In vitro can unwind partially double-stranded DNA with a preference for 5'-single-stranded DNA overhangs. Involved in many cellular processes, which do not necessarily require its ATPase/helicase catalytic activities. Involved in the regulation of transcription and translation initiation. Involved in innate immunity. Involved in both stress and inflammatory responses. May negatively regulate extrinsic apoptotic signaling pathway via death domain receptors. May be involved in mitotic chromosome segregation. Required for canonical Wnt signaling involved in anteroposterior neural patterning. The protein is Putative ATP-dependent RNA helicase an3 (an3) of Xenopus laevis (African clawed frog).